We begin with the raw amino-acid sequence, 293 residues long: Ribosomal protein L11 methyltransferase (293 aa).

Residues Thr-145, Gly-166, Asp-188, and Asn-230 each coordinate S-adenosyl-L-methionine.

It belongs to the methyltransferase superfamily. PrmA family.

The protein localises to the cytoplasm. The catalysed reaction is L-lysyl-[protein] + 3 S-adenosyl-L-methionine = N(6),N(6),N(6)-trimethyl-L-lysyl-[protein] + 3 S-adenosyl-L-homocysteine + 3 H(+). Its function is as follows. Methylates ribosomal protein L11. This Edwardsiella ictaluri (strain 93-146) protein is Ribosomal protein L11 methyltransferase.